The chain runs to 178 residues: Large ribosomal subunit protein uL6 (178 aa).

It belongs to the universal ribosomal protein uL6 family. In terms of assembly, part of the 50S ribosomal subunit.

Functionally, this protein binds to the 23S rRNA, and is important in its secondary structure. It is located near the subunit interface in the base of the L7/L12 stalk, and near the tRNA binding site of the peptidyltransferase center. The polypeptide is Large ribosomal subunit protein uL6 (Clavibacter sepedonicus (Clavibacter michiganensis subsp. sepedonicus)).